The sequence spans 452 residues: Mitochondrial import inner membrane translocase subunit TIM44 (452 aa).

Position 128 is a phosphothreonine (Thr-128). 166–173 contributes to the ATP binding site; that stretch reads SGEKLGKT. Lys-177 bears the N6-succinyllysine mark. Ser-180 carries the post-translational modification Phosphoserine. At Lys-217 the chain carries N6-succinyllysine.

This sequence belongs to the Tim44 family. In terms of assembly, probable component of the PAM complex at least composed of a mitochondrial HSP70 protein, GRPEL1 or GRPEL2, TIMM44, TIMM16/PAM16 and TIMM14/DNAJC19. The complex interacts with the TIMM23 component of the TIM23 complex. Interacts with SLC25A4/ANT1 and SLC25A5/ANT2; leading to inhibit the presequence translocase TIMM23, thereby promoting stabilization of PINK1.

The protein resides in the mitochondrion inner membrane. Essential component of the PAM complex, a complex required for the translocation of transit peptide-containing proteins from the inner membrane into the mitochondrial matrix in an ATP-dependent manner. Recruits mitochondrial HSP70 to drive protein translocation into the matrix using ATP as an energy source. The sequence is that of Mitochondrial import inner membrane translocase subunit TIM44 (Timm44) from Mus musculus (Mouse).